A 210-amino-acid polypeptide reads, in one-letter code: DNA-directed RNA polymerases I, II, and III subunit RPABC1 (210 aa).

An N-acetylmethionine modification is found at Met1. Lys81 is covalently cross-linked (Glycyl lysine isopeptide (Lys-Gly) (interchain with G-Cter in SUMO2)).

It belongs to the archaeal Rpo5/eukaryotic RPB5 RNA polymerase subunit family. In terms of assembly, component of the RNA polymerase I (Pol I), RNA polymerase II (Pol II) and RNA polymerase III (Pol III) complexes consisting of at least 13, 12 and 17 subunits, respectively. Pol I complex consists of a ten-subunit catalytic core composed of POLR1A/RPA1, POLR1B/RPA2, POLR1C/RPAC1, POLR1D/RPAC2, POLR1H/RPA12, POLR2E/RPABC1, POLR2F/RPABC2, POLR2H/RPABC3, POLR2K/RPABC4 and POLR2L/RPABC5; a mobile stalk subunit POLR1F/RPA43 protruding from the core and additional subunits homologous to general transcription factors POLR1E/RPA49 and POLR1G/RPA34. Part of Pol I pre-initiation complex (PIC), in which Pol I core assembles with RRN3 and promoter-bound UTBF and SL1/TIF-IB complex. Pol II complex contains a ten-subunit catalytic core composed of POLR2A/RPB1, POLR2B/RPB2, POLR2C/RPB3, POLR2I/RPB9, POLR2J/RPB11, POLR2E/RPABC1, POLR2F/RPABC2, POLR2H/RPABC3, POLR2K/RPABC4 and POLR2L/RPABC5 and a mobile stalk composed of two subunits POLR2D/RPB4 and POLR2G/RPB7. Part of Pol II(G) complex, in which Pol II core associates with an additional subunit POLR2M; unlike conventional Pol II, Pol II(G) functions as a transcriptional repressor. Part of TBP-based Pol II pre-initiation complex (PIC), in which Pol II core assembles with general transcription factors and other specific initiation factors including GTF2E1, GTF2E2, GTF2F1, GTF2F2, TCEA1, ERCC2, ERCC3, GTF2H2, GTF2H3, GTF2H4, GTF2H5, GTF2A1, GTF2A2, GTF2B and TBP; this large multi-subunit PIC complex mediates DNA unwinding and targets Pol II core to the transcription start site where the first phosphodiester bond forms. In Pol II complex, this subunit is present in 2-fold molar excess over the other subunits. Pol III complex consists of a ten-subunit catalytic core composed of POLR3A/RPC1, POLR3B/RPC2, POLR1C/RPAC1, POLR1D/RPAC2, POLR3K/RPC10, POLR2E/RPABC1, POLR2F/RPABC2, POLR2H/RPABC3, POLR2K/RPABC4 and POLR2L/RPABC5; a mobile stalk composed of two subunits POLR3H/RPC8 and CRCP/RPC9, protruding from the core and functioning primarily in transcription initiation; and additional subunits homologous to general transcription factors of the RNA polymerase II machinery, POLR3C/RPC3-POLR3F/RPC6-POLR3G/RPC7 heterotrimer required for transcription initiation and POLR3D/RPC4-POLR3E/RPC5 heterodimer involved in both transcription initiation and termination. Component of the PAQosome complex which is responsible for the biogenesis of several protein complexes and which consists of R2TP complex members RUVBL1, RUVBL2, RPAP3 and PIH1D1, URI complex members PFDN2, PFDN6, PDRG1, UXT and URI1 as well as ASDURF, POLR2E and DNAAF10/WDR92. Interacts with URI1.

The protein localises to the nucleus. It localises to the nucleolus. In terms of biological role, DNA-dependent RNA polymerase catalyzes the transcription of DNA into RNA using the four ribonucleoside triphosphates as substrates. Common component of RNA polymerases I, II and III which synthesize ribosomal RNA precursors, mRNA precursors and many functional non-coding RNAs, and small RNAs, such as 5S rRNA and tRNAs, respectively. Pol II is the central component of the basal RNA polymerase II transcription machinery. Pols are composed of mobile elements that move relative to each other. In Pol II, POLR2E/RPABC1 is part of the lower jaw surrounding the central large cleft and thought to grab the incoming DNA template. Seems to be the major component in this process. The protein is DNA-directed RNA polymerases I, II, and III subunit RPABC1 of Mus musculus (Mouse).